A 239-amino-acid polypeptide reads, in one-letter code: Tetratricopeptide repeat protein 9B (239 aa).

The tract at residues 1-54 (MQRGALSPVLMLSAAPEPPPRPPPALSPPGPGSAPRHGSARSGPAPEPSGGLAA) is disordered. Phosphoserine occurs at positions 7 and 27. Over residues 16 to 32 (PEPPPRPPPALSPPGPG) the composition is skewed to pro residues. The TPR 1 repeat unit spans residues 63–97 (AVAFKAEGQRCYREKKFREAIGKYHRALLQLKAAQ). Residues 98 to 121 (GARPGGLPTPSPGPTTSPGPARLS) form a disordered region. The segment covering 104–114 (LPTPSPGPTTS) has biased composition (pro residues). Residues 169 to 202 (FKATYRAGIAFYHLGDYARALRYLQEARSREPTD) form a TPR 2 repeat.

Belongs to the TTC9 family.

This chain is Tetratricopeptide repeat protein 9B (Ttc9b), found in Mus musculus (Mouse).